The following is a 378-amino-acid chain: Beta-1,3-galactosyltransferase 4 (378 aa).

Over 1-8 (MQLRLFRR) the chain is Cytoplasmic. The chain crosses the membrane as a helical; Signal-anchor for type II membrane protein span at residues 9–19 (LLLAALLLVIV). Over 20 to 378 (WTLFGPSGLG…RCRAIAWLQS (359 aa)) the chain is Lumenal. N-linked (GlcNAc...) asparagine glycosylation is present at Asn149.

This sequence belongs to the glycosyltransferase 31 family. In terms of tissue distribution, highly expressed in heart, skeletal muscle and pancreas and, to a lesser extent, in brain, placenta, kidney, liver and lung.

It localises to the golgi apparatus membrane. The catalysed reaction is a ganglioside GM2 (d18:1(4E)) + UDP-alpha-D-galactose = a ganglioside GM1 (d18:1(4E)) + UDP + H(+). The enzyme catalyses a ganglioside GM2 + UDP-alpha-D-galactose = a ganglioside GM1 + UDP + H(+). It catalyses the reaction a ganglioside GD2 (d18:1(4E)) + UDP-alpha-D-galactose = a ganglioside GD1b (d18:1(4E)) + UDP + H(+). It carries out the reaction a ganglioside GA2 (d18:1(4E)) + UDP-alpha-D-galactose = a ganglioside GA1 (d18:1(4E)) + UDP + H(+). It participates in protein modification; protein glycosylation. Involved in GM1/GD1B/GA1 ganglioside biosynthesis. The sequence is that of Beta-1,3-galactosyltransferase 4 from Homo sapiens (Human).